The following is an 85-amino-acid chain: Toxin BmKaTX15 (85 aa).

The first 19 residues, 1 to 19 (MNYLVFFSLALLVMTGVES), serve as a signal peptide directing secretion. The LCN-type CS-alpha/beta domain maps to 21 to 83 (RDGYIADDKN…VPIRVPGKCN (63 aa)). Cystine bridges form between cysteine 31-cysteine 82, cysteine 35-cysteine 55, cysteine 41-cysteine 65, and cysteine 45-cysteine 67.

It belongs to the long (4 C-C) scorpion toxin superfamily. Sodium channel inhibitor family. Alpha subfamily. Expressed by the venom gland.

Its subcellular location is the secreted. Alpha toxins bind voltage-independently at site-3 of sodium channels (Nav) and inhibit the inactivation of the activated channels, thereby blocking neuronal transmission. This is Toxin BmKaTX15 from Olivierus martensii (Manchurian scorpion).